The sequence spans 159 residues: NADH-quinone oxidoreductase subunit B (159 aa).

The [4Fe-4S] cluster site is built by C37, C38, C102, and C132.

It belongs to the complex I 20 kDa subunit family. As to quaternary structure, NDH-1 is composed of 14 different subunits. Subunits NuoB, C, D, E, F, and G constitute the peripheral sector of the complex. The cofactor is [4Fe-4S] cluster.

The protein resides in the cell inner membrane. It catalyses the reaction a quinone + NADH + 5 H(+)(in) = a quinol + NAD(+) + 4 H(+)(out). In terms of biological role, NDH-1 shuttles electrons from NADH, via FMN and iron-sulfur (Fe-S) centers, to quinones in the respiratory chain. Couples the redox reaction to proton translocation (for every two electrons transferred, four hydrogen ions are translocated across the cytoplasmic membrane), and thus conserves the redox energy in a proton gradient. The chain is NADH-quinone oxidoreductase subunit B from Polaromonas naphthalenivorans (strain CJ2).